We begin with the raw amino-acid sequence, 403 residues long: Rhomboid-like protein 15 (403 aa).

5 helical membrane passes run 22 to 42, 70 to 90, 103 to 123, 141 to 161, and 176 to 196; these read IPFL…ICLL, AIIF…LVPM, LLYL…LIAS, AIGF…LSGV, and LYPW…SLLG. S145 functions as the Nucleophile in the catalytic mechanism. H197 functions as the Charge relay system in the catalytic mechanism. The chain crosses the membrane as a helical span at residues 198–218; sequence LCGILSGFSYSYGLFNFLMPG. Residues 282-316 form a disordered region; it reads EASNQSSEDSRFPGRGRTLSTARDPTAPAGETDPN. A UBA domain is found at 361 to 401; it reads AASEEQIQKLVAMGFDRTQVEVALAAADDDLTVAVEILMSQ.

Belongs to the peptidase S54 family.

It is found in the membrane. Probable rhomboid-type serine protease that catalyzes intramembrane proteolysis. May function in senescence. This chain is Rhomboid-like protein 15, found in Arabidopsis thaliana (Mouse-ear cress).